Consider the following 236-residue polypeptide: (5-formylfuran-3-yl)methyl phosphate synthase (236 aa).

The active-site Schiff-base intermediate with substrate is the Lys27. Residue Lys85 is the Proton acceptor of the active site.

Belongs to the MfnB family.

It carries out the reaction 2 D-glyceraldehyde 3-phosphate = 4-(hydroxymethyl)-2-furancarboxaldehyde phosphate + phosphate + 2 H2O. It participates in cofactor biosynthesis; methanofuran biosynthesis. Functionally, catalyzes the formation of 4-(hydroxymethyl)-2-furancarboxaldehyde phosphate (4-HFC-P) from two molecules of glyceraldehyde-3-P (GA-3-P). In Methanococcus maripaludis (strain C7 / ATCC BAA-1331), this protein is (5-formylfuran-3-yl)methyl phosphate synthase.